A 477-amino-acid chain; its full sequence is Ribosomal RNA small subunit methyltransferase F (477 aa).

Residues 125 to 131 (AAAPGSK), Glu149, Asp176, and Asp194 contribute to the S-adenosyl-L-methionine site. Residue Cys247 is the Nucleophile of the active site.

It belongs to the class I-like SAM-binding methyltransferase superfamily. RsmB/NOP family.

It localises to the cytoplasm. The enzyme catalyses cytidine(1407) in 16S rRNA + S-adenosyl-L-methionine = 5-methylcytidine(1407) in 16S rRNA + S-adenosyl-L-homocysteine + H(+). Its function is as follows. Specifically methylates the cytosine at position 1407 (m5C1407) of 16S rRNA. This is Ribosomal RNA small subunit methyltransferase F from Klebsiella pneumoniae (strain 342).